The primary structure comprises 77 residues: Putative defensin-like protein 158 (77 aa).

Residues 1 to 24 (MANISWSHFLILMLVFSVVKKGKG) form the signal peptide. 4 cysteine pairs are disulfide-bonded: cysteine 31/cysteine 77, cysteine 41/cysteine 60, cysteine 46/cysteine 71, and cysteine 50/cysteine 73.

It belongs to the DEFL family.

It localises to the secreted. The sequence is that of Putative defensin-like protein 158 (LCR23) from Arabidopsis thaliana (Mouse-ear cress).